Reading from the N-terminus, the 172-residue chain is Large ribosomal subunit protein uL10 (172 aa).

Belongs to the universal ribosomal protein uL10 family. As to quaternary structure, part of the ribosomal stalk of the 50S ribosomal subunit. The N-terminus interacts with L11 and the large rRNA to form the base of the stalk. The C-terminus forms an elongated spine to which L12 dimers bind in a sequential fashion forming a multimeric L10(L12)X complex.

In terms of biological role, forms part of the ribosomal stalk, playing a central role in the interaction of the ribosome with GTP-bound translation factors. In Beijerinckia indica subsp. indica (strain ATCC 9039 / DSM 1715 / NCIMB 8712), this protein is Large ribosomal subunit protein uL10.